The primary structure comprises 131 residues: Pancreatic polypeptide prohormone (131 aa).

The first 29 residues, Met-1–Gly-29, serve as a signal peptide directing secretion. Tyr-65 carries the tyrosine amide modification.

This sequence belongs to the NPY family.

It localises to the secreted. In terms of biological role, hormone secreted by pancreatic cells that acts as a regulator of pancreatic and gastrointestinal functions probably by signaling through the G protein-coupled receptor NPY4R2. In Bos taurus (Bovine), this protein is Pancreatic polypeptide prohormone (PPY).